We begin with the raw amino-acid sequence, 504 residues long: Pentatricopeptide repeat-containing protein At1g09220, mitochondrial (504 aa).

Residues 1–87 constitute a mitochondrion transit peptide; sequence MFLFSSRRIT…FLFNPLLRCY (87 aa). PPR repeat units lie at residues 76 to 110, 120 to 156, 157 to 187, 188 to 222, 223 to 253, 255 to 289, 291 to 321, 324 to 358, 359 to 390, and 396 to 430; these read KLFL…HFLS, DSFT…GFES, HVYV…MPER, NPVT…TVVS, WTTI…DAIK, NEIT…GFVP, DIRV…IPNG, NLVS…GLKP, NRVT…MVNE, and DVKH…EKAV. The interval 431-504 is type E motif; degenerate; the sequence is VWRMLLGACS…AKLPGHSQVT (74 aa).

The protein belongs to the PPR family. PCMP-E subfamily.

Its subcellular location is the mitochondrion. This chain is Pentatricopeptide repeat-containing protein At1g09220, mitochondrial (PCMP-E25), found in Arabidopsis thaliana (Mouse-ear cress).